A 135-amino-acid polypeptide reads, in one-letter code: Serine protease inhibitor swm-1 (135 aa).

An N-terminal signal peptide occupies residues 1–16 (MRILVIITCIVAVATA). 10 disulfide bridges follow: cysteine 20-cysteine 53, cysteine 29-cysteine 48, cysteine 33-cysteine 44, cysteine 37-cysteine 73, cysteine 55-cysteine 67, cysteine 80-cysteine 114, cysteine 89-cysteine 109, cysteine 93-cysteine 105, cysteine 97-cysteine 133, and cysteine 116-cysteine 127. 2 TIL domains span residues 20 to 73 (CEAN…VSEC) and 80 to 133 (CPEN…KKDC). Asparagine 83 is a glycosylation site (N-linked (GlcNAc...) asparagine).

In terms of tissue distribution, in male, expressed in the vas deferens cuboidal cells and, in posterior body wall and male-specific diagonal muscles. In hermaphrodites, expressed in posterior body wall muscles and spermatheca.

The protein resides in the secreted. Its subcellular location is the cytoplasmic vesicle. It is found in the secretory vesicle lumen. Serine protease inhibitor. Probably by inhibiting serine protease tyr-5 in males, prevents the maturation of spermatids into mature motile spermatozoa until their transfer into a hermaphrodite. Also required for efficient sperm transfer and thus for male fertility. In Caenorhabditis elegans, this protein is Serine protease inhibitor swm-1.